We begin with the raw amino-acid sequence, 370 residues long: Serine/threonine-protein kinase RIM11/MSD1 (370 aa).

The 284-residue stretch at 39–322 (FPTTEVVGHG…ALQCLCSPYF (284 aa)) folds into the Protein kinase domain. ATP is bound by residues 45-53 (VGHGSFGVV) and K68. The active-site Proton acceptor is the D164. Y199 bears the Phosphotyrosine mark.

The protein belongs to the protein kinase superfamily. CMGC Ser/Thr protein kinase family. GSK-3 subfamily. Interacts with TDA1.

The enzyme catalyses L-seryl-[protein] + ATP = O-phospho-L-seryl-[protein] + ADP + H(+). The catalysed reaction is L-threonyl-[protein] + ATP = O-phospho-L-threonyl-[protein] + ADP + H(+). Functionally, serine/threonine protein kinase that is thought to function in regulating kinetochore activity and entry into meiosis. Could phosphorylate IME1. The sequence is that of Serine/threonine-protein kinase RIM11/MSD1 (RIM11) from Saccharomyces cerevisiae (strain ATCC 204508 / S288c) (Baker's yeast).